The following is a 2890-amino-acid chain: Bifunctional DNA-directed RNA polymerase subunit beta-beta' (2890 aa).

The DNA-directed RNA polymerase subunit beta stretch occupies residues 1–1377 (MSKKIPLKNR…DINIFGDDVD (1377 aa)). A DNA-directed RNA polymerase subunit beta' region spans residues 1384-2890 (PIVIKEDDRP…LRTLEDGPKF (1507 aa)). 4 residues coordinate Zn(2+): cysteine 1449, cysteine 1451, cysteine 1465, and cysteine 1468. Mg(2+) is bound by residues aspartate 1849, aspartate 1851, and aspartate 1853. Zn(2+)-binding residues include cysteine 2179, cysteine 2253, cysteine 2260, and cysteine 2263.

It in the N-terminal section; belongs to the RNA polymerase beta chain family. This sequence in the C-terminal section; belongs to the RNA polymerase beta' chain family. As to quaternary structure, the RNAP catalytic core consists of 2 alpha, 1 beta/beta' and 1 omega subunit. When a sigma factor is associated with the core the holoenzyme is formed, which can initiate transcription. Mg(2+) serves as cofactor. Zn(2+) is required as a cofactor.

The catalysed reaction is RNA(n) + a ribonucleoside 5'-triphosphate = RNA(n+1) + diphosphate. Its function is as follows. DNA-dependent RNA polymerase catalyzes the transcription of DNA into RNA using the four ribonucleoside triphosphates as substrates. The sequence is that of Bifunctional DNA-directed RNA polymerase subunit beta-beta' (rpoBC) from Helicobacter pylori (strain HPAG1).